The sequence spans 1257 residues: MSTGVLQFVKGIDFSGNDFSGDRFPHDVEQMTQMTWLKLNDSKLEQVPDELSRCANLEHLQMAHNQLISVHGELSDLPRLRSVIVRDNNLKTAGIPTDIFRMKDLTIIDLSRNQLREVPTNLEYAKGSIVLNLSYNNIETIPNSVCANLIDLLFLDLSNNKLDMLPPQIRRLSMLQSLKLSNNPLNHFQLKQLPSMTSLSVLHMSNTNRTLDNIPPTLDDMHNLRDVDFSENNLPIVPEALFKLRNLRKLNLSGNKIEKLNMTEGEWENLETLNMSHNQLTVLPDCVVKLTRLTKLYAANNQLTFEGIPSGIGKLIQLTVLHLSYNKLELVPEGISRCVKLQKLKLDHNRLITLPEGIHLLPDLKVLDLHENENLVMPPKPNDARKKLAFYNIDFSLEHQRKIAGQMTSPSSSISSVHSGGARQDALARRKEFIRRRKQQADQQSADKVIQGMSKIAGVGAALTEKQQEEEERQLEAKSAVNWKKNIEKNRRHIDYSDIFDEDVGSDEGMWVWEIENFYPSIMDEAFHGQFYDADAYLVLKTTREASGQLRHAIFYWLGEHASLDKGMCSAVHAVGLRNHLNATCRTQREEMNDETEEFLTLFGEEIVYIEGGRTISGFYTTEKPAHLTRLYRAGVNGTAVEMEPVPLSVESLDPRFCFLLDAGETIWIWSGYKSRITVSNKARLFAERLNKRDRKGKSEIETCRQARCPPEFWQALTGNPDKPQGAIVEHVPEGFVAERKKLYKVNIGMGFLELPQVELPKGIAKQDMLGSKGVFVLDSNSDIFLWIGKKANRLLKMAGQKLVVELHQMIDRPDYAQVYRETEGEESMMFRSKFAGWDEIVPVDYTRTSDSVQRVPDLKVIVKKDNMMRADLAALFLERQPSMSYEESEELMEDCNYDLELMESFVLEGKKFVKLPQKEFGIFYTMDCYVFLCRYAVMPEEDEEGEDEHDEDDKPEMDFKCVVYFWQGRDASNMGWLNFTFQLQPNFEEIFKDKLEVVRMYQQQENHKFLSHFKRKFLIKRGRRGLTKNLGGKWPELFQMRANGSSVCNRTIQVDCQANQLCSAFCHMLRIPFKEIEEDGHRGVVYVWMGKDSDPREHEFARQVASDLVVRDDDNDFRIVEVQEGEENEEFWKVLGGKKKYETDSSFVKHTRLFRCTNEKGYFAISEKTVDFCQDDLDDDDIMILDNGDAVFLWIGARSSDIEAKLSYQAAQVYHASMRMKANEKPRKFMLAVRGRESCRFRKCFHAWSKMKEPMG.

LRR repeat units follow at residues 6–31 (LQFVKGIDFSGNDFSGDRFPHDVEQM), 32–54 (TQMTWLKLNDSKLEQVPDELSRC), 56–77 (NLEHLQMAHNQLISVHGELSDL), 78–102 (PRLRSVIVRDNNLKTAGIPTDIFRM), 103–126 (KDLTIIDLSRNQLREVPTNLEYAK), 128–148 (SIVLNLSYNNIETIPNSVCAN), 149–172 (LIDLLFLDLSNNKLDMLPPQIRRL), 174–195 (MLQSLKLSNNPLNHFQLKQLPS), 197–221 (TSLSVLHMSNTNRTLDNIPPTLDDM), 222–244 (HNLRDVDFSENNLPIVPEALFKL), 246–267 (NLRKLNLSGNKIEKLNMTEGEW), 268–290 (ENLETLNMSHNQLTVLPDCVVKL), 292–315 (RLTKLYAANNQLTFEGIPSGIGKL), 316–338 (IQLTVLHLSYNKLELVPEGISRC), 339–361 (VKLQKLKLDHNRLITLPEGIHLL), and 363–384 (DLKVLDLHENENLVMPPKPNDA). 4 Gelsolin-like repeats span residues 523-600 (MDEA…EEFL), 640-714 (AVEM…PEFW), 759-832 (ELPK…MMFR), and 1168-1243 (EKTV…CRFR).

It belongs to the villin/gelsolin family.

May play a key role in embryonic cellularization by interacting with both the cytoskeleton and other cellular components. The sequence is that of Protein flightless-1 homolog (fli-1) from Caenorhabditis elegans.